A 100-amino-acid chain; its full sequence is MTLTKAELADLLFEKVGLNKREAKDMVEAFFEEIRNALEVGDGVKLSGFGNFQLRDKPQRPGRNPKTGQEIPITARRVVTFHASQKLKSDVELAFDGTAA.

It belongs to the bacterial histone-like protein family. As to quaternary structure, heterodimer of an alpha and a beta chain.

Its function is as follows. This protein is one of the two subunits of integration host factor, a specific DNA-binding protein that functions in genetic recombination as well as in transcriptional and translational control. This chain is Integration host factor subunit alpha 2, found in Dechloromonas aromatica (strain RCB).